We begin with the raw amino-acid sequence, 160 residues long: Cytochrome b6-f complex subunit 4 (160 aa).

3 helical membrane passes run 36-56 (LLYM…SLAV), 95-115 (LIGI…PFIE), and 131-151 (AVFL…TLPI).

This sequence belongs to the cytochrome b family. PetD subfamily. As to quaternary structure, the 4 large subunits of the cytochrome b6-f complex are cytochrome b6, subunit IV (17 kDa polypeptide, petD), cytochrome f and the Rieske protein, while the 4 small subunits are petG, petL, petM and petN. The complex functions as a dimer.

Its subcellular location is the plastid. The protein resides in the chloroplast thylakoid membrane. Functionally, component of the cytochrome b6-f complex, which mediates electron transfer between photosystem II (PSII) and photosystem I (PSI), cyclic electron flow around PSI, and state transitions. This chain is Cytochrome b6-f complex subunit 4, found in Bigelowiella natans (Pedinomonas minutissima).